The sequence spans 64 residues: Fatty acid-binding protein (64 aa).

Belongs to the calycin superfamily. Fatty-acid binding protein (FABP) family.

The protein localises to the cytoplasm. Functionally, FABPs are thought to play a role in the intracellular transport of long-chain fatty acids and their acyl-CoA esters. This Acarus siro (Flour mite) protein is Fatty acid-binding protein.